A 968-amino-acid polypeptide reads, in one-letter code: Serine/threonine-protein kinase 10 (968 aa).

A phosphoserine mark is found at S13 and S20. The 259-residue stretch at 36 to 294 (WEIVGELGDG…AAQLLEHPFV (259 aa)) folds into the Protein kinase domain. ATP is bound by residues 42–50 (LGDGAFGKV) and K65. The Proton acceptor role is filled by D157. An activation segment region spans residues 175-224 (DFGVSAKNLKTLQKRDSFIGTPYWMAPEVVMCETMKDTPYDYKADIWSLG). At S191 the chain carries Phosphoserine. 2 stretches are compositionally biased toward polar residues: residues 337 to 351 (LENHTQNSSEVSPPS) and 361 to 393 (SPSTPLAPSQSQDSVNEPCSQPSGDRSLQTTSP). Disordered stretches follow at residues 337–411 (LENH…VPLR) and 425–490 (AQEK…CSSL). Phosphoserine is present on residues S438, S450, S454, S485, S514, and S549. The segment covering 441 to 457 (ANRSQKASQSRPNSSAL) has biased composition (polar residues). A coiled-coil region spans residues 573–947 (QKEEHRNQTQ…FFKLSEEAEC (375 aa)). Disordered stretches follow at residues 668-690 (VEKLPRQQRKESMKQKMEEHTQK), 827-865 (INGGGSAAEQREKIKQFSQQEEKRQKSERLQQQQKHENQ), 910-929 (LKEWRDKLRPRKKALEEDLN), and 944-968 (EAECPNPSTPSKAAKFFPYSSADAS). The segment covering 835 to 865 (EQREKIKQFSQQEEKRQKSERLQQQQKHENQ) has biased composition (basic and acidic residues). Residue T952 is modified to Phosphothreonine.

Belongs to the protein kinase superfamily. STE Ser/Thr protein kinase family. STE20 subfamily. As to quaternary structure, homodimer; homodimerization is required for activation segment autophosphorylation. Autophosphorylates following homodimerization, leading to activation of the protein. In terms of tissue distribution, highly expressed in rapidly proliferating tissues (spleen, placenta, and peripheral blood leukocytes). Also expressed in brain, heart, skeletal muscle, colon, thymus, kidney, liver, small intestine and lung.

Its subcellular location is the cell membrane. The catalysed reaction is L-seryl-[protein] + ATP = O-phospho-L-seryl-[protein] + ADP + H(+). It catalyses the reaction L-threonyl-[protein] + ATP = O-phospho-L-threonyl-[protein] + ADP + H(+). Inhibited by the pyrrole-indolinone inhibitor SU11274 (K00593): intercalates between the ATP-binding Lys-65 and alpha-C glutamate (Glu-81), resulting in a partial disordering of the lysine side chain. Also specifically inhibited by erlotinib. Slightly inhibited by gefitinib. Serine/threonine-protein kinase involved in regulation of lymphocyte migration. Phosphorylates MSN, and possibly PLK1. Involved in regulation of lymphocyte migration by mediating phosphorylation of ERM proteins such as MSN. Acts as a negative regulator of MAP3K1/MEKK1. May also act as a cell cycle regulator by acting as a polo kinase kinase: mediates phosphorylation of PLK1 in vitro; however such data require additional evidences in vivo. This chain is Serine/threonine-protein kinase 10 (STK10), found in Homo sapiens (Human).